The following is a 564-amino-acid chain: 5-hydroxytryptamine receptor 1 (564 aa).

Residues 1 to 26 (MALSGQDWRRHQSHRQHRNHRTQGNH) are disordered. The segment covering 11–23 (HQSHRQHRNHRTQ) has biased composition (basic residues). The helical transmembrane segment at 29–51 (LISTATLTLFVLFLSSWIAYAAG) threads the bilayer. Repeat copies occupy residues 89–90 (GS), 91–92 (GS), 93–94 (GS), 95–96 (GS), 97–98 (GS), 99–100 (GS), 101–102 (GS), 103–104 (GS), and 105–106 (GS). Residues 89–106 (GSGSGSGSGSGSGSGSGS) are 9 X 2 AA tandem repeats of G-S. A helical membrane pass occupies residues 165–188 (VSIVLLIVILGTVVGNVLVCIAVC). The Cytoplasmic portion of the chain corresponds to 189 to 198 (MVRKLRRPCN). A helical transmembrane segment spans residues 199 to 222 (YLLVSLALSDLCVALLVMPMALLY). At 223–236 (EVLEKWNFGPLLCD) the chain is on the extracellular side. A disulfide bridge links C235 with C314. A helical membrane pass occupies residues 237–258 (IWVSFDVLCCTASILNLCAISV). Residues 238–247 (WVSFDVLCCT) form an agonist binding region. Ergotamine is bound by residues D242 and T247. The DRY motif; important for ligand-induced conformation changes motif lies at 259–261 (DRY). Residues 259-278 (DRYLAITKPLEYGVKRTPRR) are Cytoplasmic-facing. A helical membrane pass occupies residues 279 to 302 (MMLCVGIVWLAAACISLPPLLILG). Topologically, residues 303–330 (NEHEDEEGQPICTVCQNFAYQIYATLGS) are extracellular. The helical transmembrane segment at 331 to 353 (FYIPLSVMLFVYYQIFRAARRIV) threads the bilayer. Over 354 to 454 (LEEKRAQTHL…QLAKEKKAST (101 aa)) the chain is Cytoplasmic. The segment at 367 to 396 (LNGTGSPSAPQAPPLGHTELASSGNGQRHS) is disordered. Residues 386 to 396 (LASSGNGQRHS) show a composition bias toward polar residues. A helical transmembrane segment spans residues 455–476 (TLGIIMSAFTVCWLPFFILALI). The Extracellular segment spans residues 477 to 487 (RPFETMHVPAS). Residues 488-510 (LSSLFLWLGYANSLLNPIIYATL) traverse the membrane as a helical segment. The short motif at 503–507 (NPIIY) is the NPxxY motif; important for ligand-induced conformation changes and signaling element. The Cytoplasmic segment spans residues 511–564 (NRDFRKPFQEILYFRCSSLNTMMRENYYQDQYGEPPSQRVMLGDERHGARESFL).

The protein belongs to the G-protein coupled receptor 1 family. 5-hydroxytryptamine receptor subfamily. In terms of tissue distribution, expressed predominantly in adult heads.

Its subcellular location is the cell membrane. In terms of biological role, G-protein coupled receptor for 5-hydroxytryptamine (serotonin). Also functions as a receptor for various alkaloids. Ligand binding causes a conformation change that triggers signaling via guanine nucleotide-binding proteins (G proteins) and modulates the activity of down-stream effectors, such as adenylate cyclase. Signaling activates adenylate cyclase activity. The protein is 5-hydroxytryptamine receptor 1 (5-HT7) of Drosophila melanogaster (Fruit fly).